The following is a 262-amino-acid chain: Kallikrein-1 (262 aa).

A signal peptide spans 1-18; that stretch reads MWFLVLCLALSLGGTGAA. A propeptide spans 19–24 (activation peptide); the sequence is PPIQSR. One can recognise a Peptidase S1 domain in the interval 25-259; the sequence is IVGGWECEQH…YVKWIEDTIA (235 aa). Cystine bridges form between cysteine 31-cysteine 174, cysteine 50-cysteine 66, cysteine 153-cysteine 220, cysteine 185-cysteine 199, and cysteine 210-cysteine 235. The active-site Charge relay system is the histidine 65. An O-linked (GalNAc...) serine glycan is attached at serine 93. N-linked (GlcNAc...) asparagine glycosylation is present at asparagine 102. A glycan (O-linked (GalNAc...) serine) is linked at serine 104. Asparagine 108 carries an N-linked (GlcNAc...) asparagine glycan. The active-site Charge relay system is aspartate 120. An N-linked (GlcNAc...) asparagine; partial glycan is attached at asparagine 165. Residue serine 167 is glycosylated (O-linked (GalNAc...) serine). Catalysis depends on serine 214, which acts as the Charge relay system.

Belongs to the peptidase S1 family. Kallikrein subfamily. In terms of processing, the O-linked polysaccharides on Ser-93, Ser-104 and Ser-167 are probably the mucin type linked to GalNAc. In PubMed:3163150, GalNAc was detected with the corresponding peptides but not located. As to expression, isoform 2 is expressed in pancreas, salivary glands, kidney, colon, prostate gland, testis, spleen and the colon adenocarcinoma cell line T84.

The catalysed reaction is Preferential cleavage of Arg-|-Xaa bonds in small molecule substrates. Highly selective action to release kallidin (lysyl-bradykinin) from kininogen involves hydrolysis of Met-|-Xaa or Leu-|-Xaa.. In terms of biological role, glandular kallikreins cleave Met-Lys and Arg-Ser bonds in kininogen to release Lys-bradykinin. Its function is as follows. (Microbial infection) Cleaves Neisseria meningitidis NHBA in saliva; Neisseria is an obligate commensal of the nasopharyngeal mucosa. This is Kallikrein-1 (KLK1) from Homo sapiens (Human).